Consider the following 316-residue polypeptide: Aprataxin (316 aa).

Residues 1 to 38 (HASARGEGFLLLKADCNKGYVTVKQIGVNPTSVDLVDV) form the FHA-like domain. Positions 104 to 142 (KKMEVVDTQSSSADLRPSKSSVSPHEGTTSRKEHLGHWS) are disordered. The segment covering 110–130 (DTQSSSADLRPSKSSVSPHEG) has biased composition (polar residues). Residues 142 to 247 (SQGLKSSMQD…ISQDFDSPAL (106 aa)) enclose the HIT domain. 2 interaction with DNA substrate regions span residues 167–171 (DKYPK) and 229–230 (SM). A Histidine triad motif motif is present at residues 232 to 236 (QLHLH). His234 functions as the Tele-AMP-histidine intermediate in the catalytic mechanism. Residues 291–313 (LRCHLCKQQLSTIPQLKEHLKKH) form a C2H2-type zinc finger.

The protein resides in the nucleus. It localises to the nucleoplasm. Its subcellular location is the nucleolus. It carries out the reaction a 5'-end adenosine-5'-diphospho-5'-2'-deoxyribonucleoside-DNA + H2O = a 5'-end 5'-phospho-2'-deoxyribonucleoside-DNA + AMP + 2 H(+). The catalysed reaction is a 5'-end adenosine-5'-diphospho-5'-ribonucleoside-2'-deoxyribonucleotide-DNA + H2O = a 5'-end 5'-phospho-ribonucleoside-2'-deoxyribonucleotide-DNA + AMP + 2 H(+). It catalyses the reaction a 3'-end 2'-deoxyribonucleotide-3'-diphospho-5'-guanosine-DNA + H2O = a 3'-end 2'-deoxyribonucleotide 3'-phosphate-DNA + GMP + 2 H(+). In terms of biological role, DNA-binding protein involved in single-strand DNA break repair, double-strand DNA break repair and base excision repair. Resolves abortive DNA ligation intermediates formed either at base excision sites, or when DNA ligases attempt to repair non-ligatable breaks induced by reactive oxygen species. Catalyzes the release of adenylate groups covalently linked to 5'-phosphate termini, resulting in the production of 5'-phosphate termini that can be efficiently rejoined. Also able to hydrolyze adenosine 5'-monophosphoramidate (AMP-NH(2)) and diadenosine tetraphosphate (AppppA), but with lower catalytic activity. Likewise, catalyzes the release of 3'-linked guanosine (DNAppG) and inosine (DNAppI) from DNA, but has higher specific activity with 5'-linked adenosine (AppDNA). This is Aprataxin (APTX) from Gallus gallus (Chicken).